Reading from the N-terminus, the 814-residue chain is Valine--tRNA ligase (814 aa).

The 'HIGH' region signature appears at 46–56; that stretch reads PTVSGQLHIGH. A 'KMSKS' region motif is present at residues 536-540; that stretch reads KMSKS. K539 is an ATP binding site.

This sequence belongs to the class-I aminoacyl-tRNA synthetase family. ValS type 2 subfamily. Monomer.

The protein resides in the cytoplasm. The catalysed reaction is tRNA(Val) + L-valine + ATP = L-valyl-tRNA(Val) + AMP + diphosphate. Functionally, catalyzes the attachment of valine to tRNA(Val). As ValRS can inadvertently accommodate and process structurally similar amino acids such as threonine, to avoid such errors, it has a 'posttransfer' editing activity that hydrolyzes mischarged Thr-tRNA(Val) in a tRNA-dependent manner. In Rickettsia typhi (strain ATCC VR-144 / Wilmington), this protein is Valine--tRNA ligase.